Here is a 928-residue protein sequence, read N- to C-terminus: MGGSASSQLDEGKCAYIRGKTEAAIKNFSPYYSRQYSVAFCNHVRTEVEQQRDLTSQFLKTKPPLAPGTILYEAELSQFSEDIKKWKERYVVVKNDYAVESYENKEAYQRGAAPKCRILPAGGKVLTSEDEYNLLSDRHFPDPLASSEKENTQPFVVLPKEFPVYLWQPFFRHGYFCFHEAADQKRFSALLSDCVRHLNHDYMKQMTFEAQAFLEAVQFFRQEKGHYGSWEMITGDEIQILSNLVMEELLPTLQTDLLPKMKGKKNDRKRTWLGLLEEAYTLVQHQVSEGLSALKEECRALTKGLEGTIRSDMDQIVNSKNYLIGKIKAMVAQPAEKSCLESVQPFLASILEELMGPVSSGFSEVRVLFEKEVNEVSQNFQTTKDSVQLKEHLDRLMNLPLHSVKMEPCYTKVNLLHERLQDLKSRFRFPHIDLVVQRTQNYMQELMENAVFTFEQLLSPHLQGEASKTAVAIEKVKLRVLKQYDYDSSTIRKKIFQEALVQITLPTVQKALASTCKPELQKYEQFIFADHTNMIHVENVYEEILHQILLDETLKVIKEAAILKKHNLFEDNMALPSESVSSLTDLKPPTGSNQASPARRASAILPGVLGSETLSNEVFQESEEEKQPEVPSSLAKGESLSLPGPSPPPDGTEQVIISRVDDPVVNPVATEDTAGLPGTCSSELEFGGTLEDEEPAQEEPEPITASGSLKALRKLLTASVEVPVDSAPVMEEDTNGESHVPQENEEEEEKEPSQAAAIHPDNCEESEVSEREAQPPCPEAHGEELGGFPEVGSPASPPASGGLTEEPLGPMEGELPGEACTLTAHEGRGGKCTEEGDASQQEGCTLGSDPICLSESQVSEEQEEMGGQSSAAQATASVNAEEIKVARIHECQWVVEDAPNPDVLLSHKDDVKEGEGGQESFPELPSEE.

G2 carries the N-myristoyl glycine lipid modification. A phosphoserine mark is found at S579, S582, S596, S602, and S646. The segment covering 580–596 (VSSLTDLKPPTGSNQAS) has biased composition (polar residues). Residues 580–600 (VSSLTDLKPPTGSNQASPARR) are disordered. Disordered stretches follow at residues 618–654 (VFQE…GTEQ) and 669–707 (ATED…TASG). Residues 690-701 (LEDEEPAQEEPE) are compositionally biased toward acidic residues. Position 708 is a phosphoserine (S708). Disordered stretches follow at residues 723-877 (PVDS…ATAS) and 899-928 (PNPD…PSEE). Positions 801–818 (GGLTEEPLGPMEGELPGE) are enriched in low complexity. The span at 825-834 (HEGRGGKCTE) shows a compositional bias: basic and acidic residues. Over residues 865–877 (MGGQSSAAQATAS) the composition is skewed to low complexity. Residues 905–915 (LSHKDDVKEGE) are compositionally biased toward basic and acidic residues. S926 carries the post-translational modification Phosphoserine.

Belongs to the Niban family. In terms of tissue distribution, expressed in various types of thyroid tumor such as papillary thyroid carcinomas and oxyphilic thyroid tumors but not in normal thyroid tissue (at protein level). Strongly expressed in heart, skeletal muscle, pancreas, white blood cells and prostate with moderate expression in colon and spleen. Expressed in renal carcinoma cells but not in normal kidney.

The protein localises to the cytoplasm. It is found in the membrane. Its function is as follows. Regulates phosphorylation of a number of proteins involved in translation regulation including EIF2A, EIF4EBP1 and RPS6KB1. May be involved in the endoplasmic reticulum stress response. This Homo sapiens (Human) protein is Protein Niban 1.